The primary structure comprises 759 residues: Glucosylceramidase (759 aa).

Glu-247 acts as the Proton donor in catalysis. The active-site Nucleophile is the Glu-497. A disordered region spans residues 576-600 (AFENESQRDPQSPAYSESQRNTESY). Polar residues predominate over residues 584–599 (DPQSPAYSESQRNTES).

The protein belongs to the glycosyl hydrolase 5 (cellulase A) family.

It localises to the membrane. It catalyses the reaction a beta-D-glucosyl-(1&lt;-&gt;1')-N-acylsphing-4-enine + H2O = an N-acylsphing-4-enine + D-glucose. In terms of biological role, specifically hydrolyzes the glucosidic linkage in glucosylceramide. May prevent accumulation of aberrent glucosylceramide containing immature ceramide. In Aspergillus fumigatus (Neosartorya fumigata), this protein is Glucosylceramidase.